A 285-amino-acid polypeptide reads, in one-letter code: E2F-associated phosphoprotein (285 aa).

Residue M1 is modified to N-acetylmethionine. The disordered stretch occupies residues 1 to 30 (MNRLPDDYDPYAVEEPSDEEPALSSSEDEV). A compositionally biased stretch (acidic residues) spans 15-30 (EPSDEEPALSSSEDEV). S17 carries the phosphoserine modification. T37 is modified (phosphothreonine). Residues 48-96 (CLTGESESSSEDEFEKEMEAELNSTMKTMEDKLSSLGTGSSSGNGKVAT) are disordered. Positions 55 to 67 (SSSEDEFEKEMEA) are enriched in acidic residues. The span at 81 to 92 (SSLGTGSSSGNG) shows a compositional bias: low complexity. 2 positions are modified to phosphoserine: S109 and S111. Residues 118–144 (VQVTKKKKKKQHKIPTNDELLYDPEKD) are disordered. A compositionally biased stretch (basic residues) spans 121–130 (TKKKKKKQHK).

Interacts with E2F1. The C-terminal half binds the N-terminal of E2F1. Also interacts with E2F2 and E2F3, but not E2F4. Ubiquitously expressed. Highest levels in heart, placenta, skeletal muscle and pancreas. Lower levels in brain, lung and kidney. In the brain, expressed in all regions with high levels in the cerebellum and cerebral cortex. Expressed in COS1 and transformed skin fibroblasts.

Its subcellular location is the cytoplasm. The protein resides in the nucleus. Its function is as follows. May play an important role in the fine-tuning of both major E2F1 activities, the regulation of the cell-cycle and the induction of apoptosis. Promotes S-phase entry, and inhibits p14(ARP) expression. This is E2F-associated phosphoprotein (EAPP) from Homo sapiens (Human).